A 356-amino-acid chain; its full sequence is Histidinol-phosphate aminotransferase (356 aa).

Lysine 208 carries the N6-(pyridoxal phosphate)lysine modification.

Belongs to the class-II pyridoxal-phosphate-dependent aminotransferase family. Histidinol-phosphate aminotransferase subfamily. As to quaternary structure, homodimer. Pyridoxal 5'-phosphate serves as cofactor.

It carries out the reaction L-histidinol phosphate + 2-oxoglutarate = 3-(imidazol-4-yl)-2-oxopropyl phosphate + L-glutamate. It participates in amino-acid biosynthesis; L-histidine biosynthesis; L-histidine from 5-phospho-alpha-D-ribose 1-diphosphate: step 7/9. The protein is Histidinol-phosphate aminotransferase of Lactococcus lactis subsp. cremoris (strain MG1363).